Here is a 474-residue protein sequence, read N- to C-terminus: Probable diacyglycerol O-acyltransferase Tgs4 (474 aa).

Residue His135 is the Proton acceptor of the active site.

Belongs to the long-chain O-acyltransferase family.

It carries out the reaction an acyl-CoA + a 1,2-diacyl-sn-glycerol = a triacyl-sn-glycerol + CoA. Its pathway is glycerolipid metabolism; triacylglycerol biosynthesis. Its function is as follows. Required for maintaining the appropriate mycolic acid composition and permeability of the envelope on its exposure to acidic pH. The chain is Probable diacyglycerol O-acyltransferase Tgs4 (tgs4) from Mycobacterium tuberculosis (strain CDC 1551 / Oshkosh).